Consider the following 400-residue polypeptide: Argininosuccinate synthase (400 aa).

8–16 (AYSGGLDTS) is an ATP binding site. Tyr87 is an L-citrulline binding site. Residue Gly117 coordinates ATP. Positions 119, 123, and 124 each coordinate L-aspartate. Asn123 contacts L-citrulline. L-citrulline-binding residues include Arg127, Ser175, Glu260, and Tyr272.

This sequence belongs to the argininosuccinate synthase family. Type 1 subfamily. Homotetramer.

It is found in the cytoplasm. The catalysed reaction is L-citrulline + L-aspartate + ATP = 2-(N(omega)-L-arginino)succinate + AMP + diphosphate + H(+). Its pathway is amino-acid biosynthesis; L-arginine biosynthesis; L-arginine from L-ornithine and carbamoyl phosphate: step 2/3. This chain is Argininosuccinate synthase, found in Mycobacterium sp. (strain JLS).